The following is a 211-amino-acid chain: uncharacterized protein (211 aa).

This sequence belongs to the nucleoside deoxyribosyltransferase family.

It is found in the cytoplasm. It localises to the nucleus. This is an uncharacterized protein from Schizosaccharomyces pombe (strain 972 / ATCC 24843) (Fission yeast).